A 71-amino-acid chain; its full sequence is MGSFSMGHWLIVLAIIVLLFGAKKIPELAKGVGKGIKTFKKEMEDETPVEKIEKADSETQSTKQNETTKNV.

A helical membrane pass occupies residues 1–21 (MGSFSMGHWLIVLAIIVLLFG). Residues 41 to 57 (KEMEDETPVEKIEKADS) show a composition bias toward basic and acidic residues. A disordered region spans residues 41 to 71 (KEMEDETPVEKIEKADSETQSTKQNETTKNV). Polar residues predominate over residues 58–71 (ETQSTKQNETTKNV).

Belongs to the TatA/E family. In terms of assembly, the Tat system comprises two distinct complexes: a TatABC complex, containing multiple copies of TatA, TatB and TatC subunits, and a separate TatA complex, containing only TatA subunits. Substrates initially bind to the TatABC complex, which probably triggers association of the separate TatA complex to form the active translocon.

Its subcellular location is the cell inner membrane. Its function is as follows. Part of the twin-arginine translocation (Tat) system that transports large folded proteins containing a characteristic twin-arginine motif in their signal peptide across membranes. TatA could form the protein-conducting channel of the Tat system. The polypeptide is Sec-independent protein translocase protein TatA (Campylobacter fetus subsp. fetus (strain 82-40)).